A 186-amino-acid chain; its full sequence is UPF0669 protein C6orf120 homolog (186 aa).

The first 19 residues, 1–19 (MVPFWAGLLVLSALPQTLG), serve as a signal peptide directing secretion. N-linked (GlcNAc...) asparagine glycosylation occurs at Asn47. The tract at residues 141-165 (KNSYSSDETPGQPRQSQGPEDTEEE) is disordered. The span at 142–159 (NSYSSDETPGQPRQSQGP) shows a compositional bias: polar residues.

It belongs to the UPF0669 family.

It localises to the secreted. This Danio rerio (Zebrafish) protein is UPF0669 protein C6orf120 homolog.